Consider the following 161-residue polypeptide: Phosphopantetheine adenylyltransferase (161 aa).

Ser9 lines the substrate pocket. ATP contacts are provided by residues 9–10 (SF) and His17. Substrate-binding residues include Lys41, Leu73, and Lys87. Residues 88–90 (GLR), Glu98, and 122–128 (YSFVSSS) contribute to the ATP site.

This sequence belongs to the bacterial CoaD family. Homohexamer. Mg(2+) serves as cofactor.

The protein localises to the cytoplasm. The enzyme catalyses (R)-4'-phosphopantetheine + ATP + H(+) = 3'-dephospho-CoA + diphosphate. Its pathway is cofactor biosynthesis; coenzyme A biosynthesis; CoA from (R)-pantothenate: step 4/5. In terms of biological role, reversibly transfers an adenylyl group from ATP to 4'-phosphopantetheine, yielding dephospho-CoA (dPCoA) and pyrophosphate. In Mycobacteroides abscessus (strain ATCC 19977 / DSM 44196 / CCUG 20993 / CIP 104536 / JCM 13569 / NCTC 13031 / TMC 1543 / L948) (Mycobacterium abscessus), this protein is Phosphopantetheine adenylyltransferase.